The chain runs to 252 residues: 2-succinyl-6-hydroxy-2,4-cyclohexadiene-1-carboxylate synthase (252 aa).

It belongs to the AB hydrolase superfamily. MenH family. Monomer.

The enzyme catalyses 5-enolpyruvoyl-6-hydroxy-2-succinyl-cyclohex-3-ene-1-carboxylate = (1R,6R)-6-hydroxy-2-succinyl-cyclohexa-2,4-diene-1-carboxylate + pyruvate. It participates in quinol/quinone metabolism; 1,4-dihydroxy-2-naphthoate biosynthesis; 1,4-dihydroxy-2-naphthoate from chorismate: step 3/7. The protein operates within quinol/quinone metabolism; menaquinone biosynthesis. Functionally, catalyzes a proton abstraction reaction that results in 2,5-elimination of pyruvate from 2-succinyl-5-enolpyruvyl-6-hydroxy-3-cyclohexene-1-carboxylate (SEPHCHC) and the formation of 2-succinyl-6-hydroxy-2,4-cyclohexadiene-1-carboxylate (SHCHC). This chain is 2-succinyl-6-hydroxy-2,4-cyclohexadiene-1-carboxylate synthase, found in Escherichia fergusonii (strain ATCC 35469 / DSM 13698 / CCUG 18766 / IAM 14443 / JCM 21226 / LMG 7866 / NBRC 102419 / NCTC 12128 / CDC 0568-73).